A 616-amino-acid chain; its full sequence is Hemagglutinin-neuraminidase (616 aa).

The Intravirion portion of the chain corresponds to 1–26 (MDRAVSQVALENDEREAKNTWRLVFR). Residues 27–47 (IAILLLTVVTLAISAAALAYS) traverse the membrane as a helical segment. Over 48 to 616 (MEASTPSDLV…ELESYAASWP (569 aa)) the chain is Virion surface. Residue N119 is glycosylated (N-linked (GlcNAc...) asparagine; by host). Residues 124–152 (GAPIHDPDYIGGIGKELIVDDASDVTSFY) are important for interaction with fusion/F protein. Intrachain disulfides connect C172–C196, C186–C247, and C238–C251. The involved in neuraminidase activity stretch occupies residues 234 to 239 (NRKSCS). N-linked (GlcNAc...) asparagine; by host glycosylation is found at N341 and N433. Cystine bridges form between C344–C461 and C455–C465. Residues N481, N538, and N600 are each glycosylated (N-linked (GlcNAc...) asparagine; by host). C531 and C542 are disulfide-bonded.

Belongs to the paramyxoviruses hemagglutinin-neuraminidase family. In terms of assembly, homotetramer; composed of disulfide-linked homodimers. Interacts with F protein trimer. Interacts with host CG-1B; this interaction inhibits viral adsorption and replication rather than internalization.

It localises to the virion membrane. The protein localises to the host cell membrane. It carries out the reaction Hydrolysis of alpha-(2-&gt;3)-, alpha-(2-&gt;6)-, alpha-(2-&gt;8)- glycosidic linkages of terminal sialic acid residues in oligosaccharides, glycoproteins, glycolipids, colominic acid and synthetic substrates.. Its function is as follows. Mediates the viral entry into the host cell together with fusion/F protein. Attaches the virus to sialic acid-containing cell receptors and thereby initiates infection. Binding of HN protein to the receptor induces a conformational change that allows the F protein to trigger virion/cell membranes fusion. In terms of biological role, neuraminidase activity ensures the efficient spread of the virus by dissociating the mature virions from the neuraminic acid containing glycoproteins. This is Hemagglutinin-neuraminidase (HN) from Gallus gallus (Chicken).